The following is a 520-amino-acid chain: GMP synthase [glutamine-hydrolyzing] (520 aa).

The Glutamine amidotransferase type-1 domain maps to 9–202; it reads RVLIVDFGSQ…LFNIAGLKGD (194 aa). Residue Cys-86 is the Nucleophile of the active site. Catalysis depends on residues His-176 and Glu-178. In terms of domain architecture, GMPS ATP-PPase spans 203–395; sequence WTMAAFRQEM…LGLAPAFVGR (193 aa). 230-236 is a binding site for ATP; sequence SGGVDSS.

As to quaternary structure, homodimer.

The enzyme catalyses XMP + L-glutamine + ATP + H2O = GMP + L-glutamate + AMP + diphosphate + 2 H(+). It functions in the pathway purine metabolism; GMP biosynthesis; GMP from XMP (L-Gln route): step 1/1. Its function is as follows. Catalyzes the synthesis of GMP from XMP. This chain is GMP synthase [glutamine-hydrolyzing], found in Caulobacter vibrioides (strain ATCC 19089 / CIP 103742 / CB 15) (Caulobacter crescentus).